The sequence spans 236 residues: Increased recombination centers protein 22-2 (236 aa).

A signal peptide spans 1–19 (MKFSAILTALTATIATVAG). The Lumenal segment spans residues 20–161 (YETSGKPHTV…AAVSFFDPRL (142 aa)). The helical transmembrane segment at 162–182 (IFLELVLLATFGGIAYFVYEI) threads the bilayer. The Cytoplasmic segment spans residues 183-236 (WGKQYLRGTAPVKVPVKKSGSPVAVKEASPVGSASGFDESWIPEAHLKKNKKKA).

It belongs to the IRC22 family.

It localises to the endoplasmic reticulum membrane. Functionally, is probably involved in a pathway contributing to genomic integrity. This Candida tropicalis (strain ATCC MYA-3404 / T1) (Yeast) protein is Increased recombination centers protein 22-2 (IRC22-2).